A 351-amino-acid polypeptide reads, in one-letter code: Phenylalanine--tRNA ligase alpha subunit (351 aa).

The segment at 45 to 69 (LGDDAPIPAARRSLGSLPKDQRKDA) is disordered. Glutamate 269 is a Mg(2+) binding site.

This sequence belongs to the class-II aminoacyl-tRNA synthetase family. Phe-tRNA synthetase alpha subunit type 1 subfamily. As to quaternary structure, tetramer of two alpha and two beta subunits. Requires Mg(2+) as cofactor.

Its subcellular location is the cytoplasm. It catalyses the reaction tRNA(Phe) + L-phenylalanine + ATP = L-phenylalanyl-tRNA(Phe) + AMP + diphosphate + H(+). This Corynebacterium jeikeium (strain K411) protein is Phenylalanine--tRNA ligase alpha subunit.